A 328-amino-acid chain; its full sequence is MSYRELIFTVAAETAEPLGDALLDLGALSVTVEDDAAGGYDENPLYEEPGLSPEVQAWDRSAVTALFNPEIDTSGSAEFIPELLASLKEVGFNLAPPQEKTIEEQDWVRLTQSQFSPIQIGERIWVVPSWHDAPNDPNAICLAVDPGLAFGTGSHPTTHLCLLWLEQQSHLKNQSLLDYGCGSGILAIAAAKLGCNPVIGTDIDPQAMVAARSNADINHTAVTFVLPNEGATELAAETKYDIVMANILANPLQVLAPALVNKMKLGGRIVLSGVLARQAEEVIATYSQWLTPSVWKESEGWVCLHGTLNQDKQNTASTVFAAPAQKKF.

Residues T158, G180, D202, and N246 each contribute to the S-adenosyl-L-methionine site.

Belongs to the methyltransferase superfamily. PrmA family.

Its subcellular location is the cytoplasm. The catalysed reaction is L-lysyl-[protein] + 3 S-adenosyl-L-methionine = N(6),N(6),N(6)-trimethyl-L-lysyl-[protein] + 3 S-adenosyl-L-homocysteine + 3 H(+). Methylates ribosomal protein L11. This is Ribosomal protein L11 methyltransferase from Polynucleobacter necessarius subsp. necessarius (strain STIR1).